Consider the following 532-residue polypeptide: P granule abnormality protein 2 (532 aa).

As to quaternary structure, interacts with pgl-1 and pgl-3; association with either pgl-1 or pgl-3 is not required for P-granule localization. In terms of tissue distribution, highly expressed in the germline.

The protein localises to the cytoplasmic granule. Transient component of P-granule which is involved in germline development. The polypeptide is P granule abnormality protein 2 (Caenorhabditis elegans).